A 329-amino-acid chain; its full sequence is Zygote arrest protein 1 (329 aa).

Disordered regions lie at residues 106-132 and 146-218; these read LRRRRQEVQTPGSPVSSGGVRFPRTQA and FREE…DDLK. Residues 149–162 show a composition bias toward acidic residues; the sequence is EGEEEEDTDLEVTE. Over residues 166-177 the composition is skewed to basic and acidic residues; it reads SAEKLESAEKNV. The 3CxxC-type zinc-finger motif lies at 231 to 314; it reads KYGFYHCKDC…RQDLCGRCKG (84 aa).

Belongs to the ZAR1 family. As to expression, specifically expressed in ovaries but absent in testes.

The protein localises to the cytoplasm. It is found in the cytoplasmic ribonucleoprotein granule. In terms of biological role, mRNA-binding protein required for maternal mRNA storage, translation and degradation during oocyte maturation. Probably promotes formation of some phase-separated membraneless compartment that stores maternal mRNAs in oocytes: acts by undergoing liquid-liquid phase separation upon binding to maternal mRNAs. Binds to the 3'-UTR of zona pellucida mRNAs, inhibiting their translation. This Danio rerio (Zebrafish) protein is Zygote arrest protein 1.